We begin with the raw amino-acid sequence, 170 residues long: 6,7-dimethyl-8-ribityllumazine synthase (170 aa).

Residues Trp-25, 57 to 59 (AVE), and 79 to 81 (AVI) each bind 5-amino-6-(D-ribitylamino)uracil. Residue 84 to 85 (DT) coordinates (2S)-2-hydroxy-3-oxobutyl phosphate. His-87 acts as the Proton donor in catalysis. Asn-112 is a binding site for 5-amino-6-(D-ribitylamino)uracil. Position 126 (Arg-126) interacts with (2S)-2-hydroxy-3-oxobutyl phosphate.

Belongs to the DMRL synthase family.

It carries out the reaction (2S)-2-hydroxy-3-oxobutyl phosphate + 5-amino-6-(D-ribitylamino)uracil = 6,7-dimethyl-8-(1-D-ribityl)lumazine + phosphate + 2 H2O + H(+). It participates in cofactor biosynthesis; riboflavin biosynthesis; riboflavin from 2-hydroxy-3-oxobutyl phosphate and 5-amino-6-(D-ribitylamino)uracil: step 1/2. Functionally, catalyzes the formation of 6,7-dimethyl-8-ribityllumazine by condensation of 5-amino-6-(D-ribitylamino)uracil with 3,4-dihydroxy-2-butanone 4-phosphate. This is the penultimate step in the biosynthesis of riboflavin. The protein is 6,7-dimethyl-8-ribityllumazine synthase of Thermobifida fusca (strain YX).